Here is a 160-residue protein sequence, read N- to C-terminus: Transcription elongation factor GreA (160 aa).

A coiled-coil region spans residues 2-30 (SEKTYPMTLAEKEQLEQELEELKLVRRPE).

The protein belongs to the GreA/GreB family.

Its function is as follows. Necessary for efficient RNA polymerase transcription elongation past template-encoded arresting sites. The arresting sites in DNA have the property of trapping a certain fraction of elongating RNA polymerases that pass through, resulting in locked ternary complexes. Cleavage of the nascent transcript by cleavage factors such as GreA or GreB allows the resumption of elongation from the new 3'terminus. GreA releases sequences of 2 to 3 nucleotides. The protein is Transcription elongation factor GreA of Streptococcus mutans serotype c (strain ATCC 700610 / UA159).